We begin with the raw amino-acid sequence, 687 residues long: POZ-, AT hook-, and zinc finger-containing protein 1 (687 aa).

Positions 41 to 130 (CDVLLRVGDE…AYTSRIVVRL (90 aa)) constitute a BTB domain. Lys112 is covalently cross-linked (Glycyl lysine isopeptide (Lys-Gly) (interchain with G-Cter in SUMO2)). Over residues 250 to 260 (PFPSVASSAPP) the composition is skewed to low complexity. Residues 250 to 278 (PFPSVASSAPPLTGKRGRGRPRKANLLDS) are disordered. The a.T hook DNA-binding region spans 264–276 (KRGRGRPRKANLL). A Glycyl lysine isopeptide (Lys-Gly) (interchain with G-Cter in SUMO2) cross-link involves residue Lys272. Ser282 carries the phosphoserine modification. A C2H2-type 1 zinc finger spans residues 292 to 314 (LPCGLCGKVFTDANRLRQHEAQH). The disordered stretch occupies residues 332–351 (GENGLPISEDPDGPRKRSRT). 5 consecutive C2H2-type zinc fingers follow at residues 355-377 (VACE…KLSH), 383-405 (YSCP…VRSH), 413-436 (YICQ…KQVH), 442-464 (HKCQ…LACH), and 495-518 (NFCS…KTHH). The segment covering 549 to 558 (EGQKCSHQDP) has biased composition (basic and acidic residues). The segment at 549–603 (EGQKCSHQDPIESSDSYGDLSDASDLKTPEKQSANGSFSCDMAVPKNKMESDGEK) is disordered. The segment at 605 to 628 (YPCPECGSFFRSKSYLNKHIQKVH) adopts a C2H2-type 7 zinc-finger fold.

It belongs to the krueppel C2H2-type zinc-finger protein family. Homodimer. Interacts with RNF4. Interacts (via C-terminus) with TP53; this interaction inhibits TP53 ability to activate transcription. Ubiquitous.

Its subcellular location is the nucleus. In terms of biological role, transcriptional regulator that plays a role in many biological processes such as embryogenesis, senescence, T-cell development or neurogenesis. Interacts with the TP53 protein to control genes that are important in proliferation and in the DNA-damage response. Mechanistically, the interaction inhibits the DNA binding and transcriptional activity of TP53/p53. Part of the transcriptional network modulating regulatory T-cell development and controls the generation of the regulatory T-cell pool under homeostatic conditions. (Microbial infection) Plays a positive role in viral cDNA synthesis. This is POZ-, AT hook-, and zinc finger-containing protein 1 (PATZ1) from Homo sapiens (Human).